The primary structure comprises 217 residues: Zinc finger CCHC-type and RNA-binding motif-containing protein 1 (217 aa).

One can recognise an RRM domain in the interval 10 to 88; sequence STVYVSNLPF…RVIKASIAID (79 aa). A CCHC-type zinc finger spans residues 105-122; it reads SKCYECGESGHLSYACPK. A disordered region spans residues 120–217; it reads CPKNMLGERE…YFSDEEELSD (98 aa). Residues 145–163 are compositionally biased toward acidic residues; that stretch reads PEEEIEEVEESEDEGEDPA. Phosphoserine is present on residues Ser155, Ser210, and Ser216.

In terms of assembly, component of the U11/U12 snRNPs that are part of the U12-type spliceosome. Interacts with ZRSR1.

The protein resides in the nucleus. It is found in the nucleoplasm. This chain is Zinc finger CCHC-type and RNA-binding motif-containing protein 1 (ZCRB1), found in Bos taurus (Bovine).